The sequence spans 298 residues: Trimeric intracellular cation channel type A (298 aa).

At 1 to 18 (MDLMSALSLGELALSFSR) the chain is on the lumenal side. The helical transmembrane segment at 19-39 (VPLFPVFDLSYFIVSIIYLKY) threads the bilayer. The Cytoplasmic segment spans residues 40–51 (EPGAVELSRRHP). Residues 52–72 (VASWLCAMLHCFGSYILADLL) traverse the membrane as a helical segment. Residues 73 to 85 (LGEPIIDYFSNSS) are Lumenal-facing. A Ca(2+)-binding site is contributed by glycine 74. A helical transmembrane segment spans residues 86–106 (SILLASGVWYLIFFCPLDLFY). Topologically, residues 107–144 (KCVCFLPVKLIFVAMKEVVRVRKIAVGIHHAHHHYHHG) are cytoplasmic. A 1,2-diacyl-sn-glycero-3-phospho-(1D-myo-inositol-4,5-bisphosphate) contacts are provided by lysine 122 and arginine 126. The helical transmembrane segment at 145-165 (WFIMIATGWVKGSGVALLSNV) threads the bilayer. At 166–178 (EQLLRGVWKPETN) the chain is on the lumenal side. A helical transmembrane segment spans residues 179-199 (EILHMSFPTKASLYGAILFTL). Residues 200-209 (QQTRWLPVSK) lie on the Cytoplasmic side of the membrane. Residues 210-230 (ASLIFVFTMFMVSCKVFLTAT) traverse the membrane as a helical segment. The Lumenal segment spans residues 231–234 (HSHS). Residues 235–255 (SPFDILEGYICPVLFGATWGG) traverse the membrane as a helical segment. Over 256–298 (DHHHDNHGAPHGMGLGTQHSGLPAKAKEELGEGSRKKKTKKAD) the chain is Cytoplasmic. Positions 260 to 298 (DNHGAPHGMGLGTQHSGLPAKAKEELGEGSRKKKTKKAD) are disordered. The span at 280–289 (KAKEELGEGS) shows a compositional bias: basic and acidic residues.

This sequence belongs to the TMEM38 family. As to quaternary structure, homotrimer; conformation seems to be controled by binding to diacylglycerol (DAG). As to expression, expressed at high levels in heart and striated muscle. Also detected in brain, lung and kidney.

The protein localises to the sarcoplasmic reticulum membrane. It localises to the nucleus membrane. It carries out the reaction K(+)(in) = K(+)(out). Channel activity is activated by a change of voltage within the sarcoplasmic reticulum lumen and blocked by luminal high Ca(2+) levels. Functionally, intracellular monovalent cation channel required for maintenance of rapid intracellular calcium release. Acts as a potassium counter-ion channel that functions in synchronization with calcium release from intracellular stores. Opened by a change of voltage within the sarcoplasmic reticulum lumen. The protein is Trimeric intracellular cation channel type A (Tmem38a) of Mus musculus (Mouse).